The primary structure comprises 162 residues: Regulatory protein RecX (162 aa).

The protein belongs to the RecX family.

It is found in the cytoplasm. Its function is as follows. Modulates RecA activity. The chain is Regulatory protein RecX from Xanthomonas campestris pv. campestris (strain 8004).